The sequence spans 1866 residues: Nucleoporin Nup188 (1866 aa).

It belongs to the Nup188 family. Part of the nuclear pore complex (NPC).

Its subcellular location is the nucleus. It localises to the nuclear pore complex. In terms of biological role, component of the nuclear pore complex (NPC), a complex required for the trafficking across the nuclear envelope. Required for proper protein transport into the nucleus. This is Nucleoporin Nup188 from Drosophila melanogaster (Fruit fly).